Here is a 373-residue protein sequence, read N- to C-terminus: AA9 family lytic polysaccharide monooxygenase A (373 aa).

The N-terminal stretch at 1-20 is a signal peptide; sequence MKSSTFGMLALAAAAKLVSA. H21 contributes to the Cu(2+) binding site. The interval 36–55 is disordered; sequence EGNSQSGYIRSPPSNSPITD. Cysteines 63 and 183 form a disulfide. H102 contributes to the Cu(2+) binding site. H169 and Q178 together coordinate O2. A Cu(2+)-binding site is contributed by Y180. The tract at residues 234–333 is disordered; it reads GASGSSSSSS…NSVPQPSSNA (100 aa). Composition is skewed to low complexity over residues 235 to 262 and 270 to 323; these read ASGSSSSSSSSASASAPAPTSAAPAPSS and PATS…AAPT. Over residues 324 to 333 the composition is skewed to polar residues; it reads NSVPQPSSNA. The CBM1 domain maps to 335–371; the sequence is GAVKEWYQCGGLNYSGSTQCEEGLTCKKWNPYYHQCV. N-linked (GlcNAc...) asparagine glycosylation occurs at N347.

The protein belongs to the polysaccharide monooxygenase AA9 family. It depends on Cu(2+) as a cofactor.

The protein localises to the secreted. The enzyme catalyses [(1-&gt;4)-beta-D-glucosyl]n+m + reduced acceptor + O2 = 4-dehydro-beta-D-glucosyl-[(1-&gt;4)-beta-D-glucosyl]n-1 + [(1-&gt;4)-beta-D-glucosyl]m + acceptor + H2O.. Its function is as follows. Lytic polysaccharide monooxygenase (LPMO) that depolymerizes crystalline and amorphous polysaccharides via the oxidation of scissile alpha- or beta-(1-4)-glycosidic bonds, yielding exclusively C4 oxidation products. Catalysis by LPMOs requires the reduction of the active-site copper from Cu(II) to Cu(I) by a reducing agent and H(2)O(2) or O(2) as a cosubstrate. In addition to cellulose, also cleaves the beta-(1!4)-glucan backbone of tamarind xyloglucan, but only next to unsubstituted glucosyl units. The chain is AA9 family lytic polysaccharide monooxygenase A from Aspergillus tamarii.